The chain runs to 592 residues: Imidazole glycerol phosphate synthase hisHF, chloroplastic (592 aa).

The transit peptide at 1–55 (MEATAAPFSSIVSSRQNFSSSSSIRASSPASLFLSQKSIGNVNRKFKSPRSLSVR) directs the protein to the chloroplast. One can recognise a Glutamine amidotransferase type-1 domain in the interval 63-271 (VVTLLDYGAG…LHPKLPATQK (209 aa)). Active-site for GATase activity residues include cysteine 141, histidine 246, and glutamate 248. Residues 280-592 (LAKRVIACLD…LQEERIEVRI (313 aa)) are cyclase. Residues aspartate 289 and aspartate 447 contribute to the active site.

In the C-terminal section; belongs to the HisA/HisF family.

It localises to the plastid. It is found in the chloroplast. The enzyme catalyses 5-[(5-phospho-1-deoxy-D-ribulos-1-ylimino)methylamino]-1-(5-phospho-beta-D-ribosyl)imidazole-4-carboxamide + L-glutamine = D-erythro-1-(imidazol-4-yl)glycerol 3-phosphate + 5-amino-1-(5-phospho-beta-D-ribosyl)imidazole-4-carboxamide + L-glutamate + H(+). It carries out the reaction L-glutamine + H2O = L-glutamate + NH4(+). Its pathway is amino-acid biosynthesis; L-histidine biosynthesis; L-histidine from 5-phospho-alpha-D-ribose 1-diphosphate: step 5/9. IGPS catalyzes the conversion of PRFAR and glutamine to IGP, AICAR and glutamate. The glutaminase domain produces the ammonia necessary for the cyclase domain to produce IGP and AICAR from PRFAR. The ammonia is channeled to the active site of the cyclase domain. The sequence is that of Imidazole glycerol phosphate synthase hisHF, chloroplastic (HISN4) from Arabidopsis thaliana (Mouse-ear cress).